Consider the following 313-residue polypeptide: MSLKVNILGHEFSNPFMNAAGVLCTTEEDLRRMTESESGSLIGKSCTLAPRTGNPEPRYFGLPLGSINSMGLPNLGVDFYLSYAAQTHDYSRKPLFLSMSGLSVEESVEMVKKLAPITKEKGTILELNLSCPNVPGKPQVGYDFDTTRTYLQKVSEAYGLPFGVKMPPYFDIAHFDMAAAVLNDFPLVKFITCVNSIGNGLVIDPANETVVIKPKQGFGGLGGKYVLPTALANVNAFFRRCPDKLVFGCGGVYSGEEAFLHILAGASMVQVGTALHDEGPIIFARLNKELQEIMTNKGYKTLDEFRGRVKTMD.

Residues Ala20 and 44 to 45 each bind FMN; that span reads KS. Substrate contacts are provided by residues Lys44, 68-72, and Asn128; that span reads NSMGL. Asn128 serves as a coordination point for FMN. Cys131 functions as the Nucleophile in the catalytic mechanism. Substrate is bound at residue Asn133. FMN contacts are provided by Lys165 and Val194. 195 to 196 is a binding site for substrate; sequence NS. FMN is bound by residues Gly223, Cys249, 249–251, and 272–273; these read CGG and GT.

It belongs to the dihydroorotate dehydrogenase family. Type 1 subfamily. In terms of assembly, homodimer. FMN serves as cofactor.

It localises to the cytoplasm. It carries out the reaction (S)-dihydroorotate + fumarate = orotate + succinate. It participates in pyrimidine metabolism; UMP biosynthesis via de novo pathway. Functionally, catalyzes the conversion of dihydroorotate to orotate with fumarate as the electron acceptor. Molecular oxygen can replace fumarate in vitro. This Trypanosoma brucei brucei (strain 927/4 GUTat10.1) protein is Dihydroorotate dehydrogenase (fumarate).